The chain runs to 310 residues: Methionyl-tRNA formyltransferase (310 aa).

109–112 (SLLP) serves as a coordination point for (6S)-5,6,7,8-tetrahydrofolate. The disordered stretch occupies residues 283–310 (QPQGKKAMPAADWARGARIGDGERFGDD). Residues 300 to 310 (RIGDGERFGDD) are compositionally biased toward basic and acidic residues.

This sequence belongs to the Fmt family.

It carries out the reaction L-methionyl-tRNA(fMet) + (6R)-10-formyltetrahydrofolate = N-formyl-L-methionyl-tRNA(fMet) + (6S)-5,6,7,8-tetrahydrofolate + H(+). In terms of biological role, attaches a formyl group to the free amino group of methionyl-tRNA(fMet). The formyl group appears to play a dual role in the initiator identity of N-formylmethionyl-tRNA by promoting its recognition by IF2 and preventing the misappropriation of this tRNA by the elongation apparatus. In Thermobifida fusca (strain YX), this protein is Methionyl-tRNA formyltransferase.